The chain runs to 220 residues: Regulatory protein VanRB (220 aa).

The 114-residue stretch at 4 to 117 folds into the Response regulatory domain; it reads RILLVEDDDH…ILLKRVEALL (114 aa). Aspartate 53 is subject to 4-aspartylphosphate. Residues 124 to 218 constitute a DNA-binding region (ompR/PhoB-type); the sequence is AKEFRVGRLT…IRGVGYRLEE (95 aa).

May be phosphorylated by VanSB. May also be dephosphorylated by VanSB.

The protein localises to the cytoplasm. Member of the two-component regulatory system VanSB/VanRB. Activates the transcription of vanSB, vanYB and vanW in response to vancomycin which results in vancomycin resistance. This is Regulatory protein VanRB (vanRB) from Enterococcus faecalis (strain ATCC 700802 / V583).